The chain runs to 359 residues: ATP-dependent (S)-NAD(P)H-hydrate dehydratase (359 aa).

The YjeF C-terminal domain occupies 61 to 350; that stretch reads LLEEARKVVP…SEINSVFVNN (290 aa). (6S)-NADPHX-binding positions include glycine 161 and 214–220; that span reads NVVEFQR. Residues 256–260 and 275–284 contribute to the ATP site; these read KGEVD and GSPRRCGGQG. Position 285 (aspartate 285) interacts with (6S)-NADPHX.

Belongs to the NnrD/CARKD family. It depends on Mg(2+) as a cofactor.

It catalyses the reaction (6S)-NADHX + ATP = ADP + phosphate + NADH + H(+). It carries out the reaction (6S)-NADPHX + ATP = ADP + phosphate + NADPH + H(+). In terms of biological role, catalyzes the dehydration of the S-form of NAD(P)HX at the expense of ATP, which is converted to ADP. Together with NAD(P)HX epimerase, which catalyzes the epimerization of the S- and R-forms, the enzyme allows the repair of both epimers of NAD(P)HX, a damaged form of NAD(P)H that is a result of enzymatic or heat-dependent hydration. The chain is ATP-dependent (S)-NAD(P)H-hydrate dehydratase from Ciona intestinalis (Transparent sea squirt).